We begin with the raw amino-acid sequence, 386 residues long: Succinate--CoA ligase [ADP-forming] subunit beta (386 aa).

The region spanning 9-244 is the ATP-grasp domain; that stretch reads KEILRNFGVP…LDEEDPAEVE (236 aa). Residues lysine 46, 53–55, glutamate 99, alanine 102, and glutamate 107 each bind ATP; that span reads GRG. Positions 199 and 213 each coordinate Mg(2+). Residues asparagine 264 and 321–323 contribute to the substrate site; that span reads GIM.

The protein belongs to the succinate/malate CoA ligase beta subunit family. In terms of assembly, heterotetramer of two alpha and two beta subunits. It depends on Mg(2+) as a cofactor.

The catalysed reaction is succinate + ATP + CoA = succinyl-CoA + ADP + phosphate. It carries out the reaction GTP + succinate + CoA = succinyl-CoA + GDP + phosphate. It participates in carbohydrate metabolism; tricarboxylic acid cycle; succinate from succinyl-CoA (ligase route): step 1/1. Functionally, succinyl-CoA synthetase functions in the citric acid cycle (TCA), coupling the hydrolysis of succinyl-CoA to the synthesis of either ATP or GTP and thus represents the only step of substrate-level phosphorylation in the TCA. The beta subunit provides nucleotide specificity of the enzyme and binds the substrate succinate, while the binding sites for coenzyme A and phosphate are found in the alpha subunit. In Polaromonas naphthalenivorans (strain CJ2), this protein is Succinate--CoA ligase [ADP-forming] subunit beta.